The following is a 491-amino-acid chain: Probable cytosol aminopeptidase (491 aa).

Lys-260 and Asp-265 together coordinate Mn(2+). The active site involves Lys-272. Positions 284, 343, and 345 each coordinate Mn(2+). Arg-347 is an active-site residue.

Belongs to the peptidase M17 family. The cofactor is Mn(2+).

It localises to the cytoplasm. It catalyses the reaction Release of an N-terminal amino acid, Xaa-|-Yaa-, in which Xaa is preferably Leu, but may be other amino acids including Pro although not Arg or Lys, and Yaa may be Pro. Amino acid amides and methyl esters are also readily hydrolyzed, but rates on arylamides are exceedingly low.. The catalysed reaction is Release of an N-terminal amino acid, preferentially leucine, but not glutamic or aspartic acids.. In terms of biological role, presumably involved in the processing and regular turnover of intracellular proteins. Catalyzes the removal of unsubstituted N-terminal amino acids from various peptides. This chain is Probable cytosol aminopeptidase, found in Rippkaea orientalis (strain PCC 8801 / RF-1) (Cyanothece sp. (strain PCC 8801)).